The sequence spans 91 residues: Long neurotoxin OH-57 (91 aa).

The N-terminal stretch at 1–21 (MKTLLLTLVVVTIVCLDLGYT) is a signal peptide. 5 disulfides stabilise this stretch: Cys-24–Cys-41, Cys-34–Cys-62, Cys-47–Cys-51, Cys-66–Cys-77, and Cys-78–Cys-83.

It belongs to the three-finger toxin family. Long-chain subfamily. Type II alpha-neurotoxin sub-subfamily. In terms of tissue distribution, expressed by the venom gland.

It localises to the secreted. Binds with high affinity to muscular (alpha-1/CHRNA1) and neuronal (alpha-7/CHRNA7) nicotinic acetylcholine receptor (nAChR) and inhibits acetylcholine from binding to the receptor, thereby impairing neuromuscular and neuronal transmission. This chain is Long neurotoxin OH-57, found in Ophiophagus hannah (King cobra).